Here is a 334-residue protein sequence, read N- to C-terminus: Ornithine carbamoyltransferase (334 aa).

Residues 56–59 (STRT), Gln83, Arg107, and 134–137 (HPTQ) contribute to the carbamoyl phosphate site. L-ornithine contacts are provided by residues Asn168, Asp232, and 236–237 (SM). Residues 274 to 275 (CL) and Arg320 contribute to the carbamoyl phosphate site.

Belongs to the aspartate/ornithine carbamoyltransferase superfamily. OTCase family.

The protein resides in the cytoplasm. The catalysed reaction is carbamoyl phosphate + L-ornithine = L-citrulline + phosphate + H(+). It functions in the pathway amino-acid biosynthesis; L-arginine biosynthesis; L-arginine from L-ornithine and carbamoyl phosphate: step 1/3. In terms of biological role, reversibly catalyzes the transfer of the carbamoyl group from carbamoyl phosphate (CP) to the N(epsilon) atom of ornithine (ORN) to produce L-citrulline. The protein is Ornithine carbamoyltransferase of Escherichia coli O45:K1 (strain S88 / ExPEC).